Reading from the N-terminus, the 179-residue chain is Shikimate kinase (179 aa).

15–20 lines the ATP pocket; the sequence is GAGKTS. T19 is a Mg(2+) binding site. D37, R61, and G83 together coordinate substrate. R122 contacts ATP. R142 contacts substrate.

This sequence belongs to the shikimate kinase family. As to quaternary structure, monomer. Mg(2+) serves as cofactor.

The protein resides in the cytoplasm. The catalysed reaction is shikimate + ATP = 3-phosphoshikimate + ADP + H(+). It functions in the pathway metabolic intermediate biosynthesis; chorismate biosynthesis; chorismate from D-erythrose 4-phosphate and phosphoenolpyruvate: step 5/7. Its function is as follows. Catalyzes the specific phosphorylation of the 3-hydroxyl group of shikimic acid using ATP as a cosubstrate. This Coxiella burnetii (strain RSA 331 / Henzerling II) protein is Shikimate kinase.